The chain runs to 509 residues: Maturase K (509 aa).

It belongs to the intron maturase 2 family. MatK subfamily.

The protein resides in the plastid. The protein localises to the chloroplast. Usually encoded in the trnK tRNA gene intron. Probably assists in splicing its own and other chloroplast group II introns. The protein is Maturase K of Nicotiana clevelandii (Wild tobacco).